We begin with the raw amino-acid sequence, 150 residues long: 3-hydroxyacyl-[acyl-carrier-protein] dehydratase FabZ (150 aa).

The active site involves His51.

The protein belongs to the thioester dehydratase family. FabZ subfamily.

It is found in the cytoplasm. It catalyses the reaction a (3R)-hydroxyacyl-[ACP] = a (2E)-enoyl-[ACP] + H2O. Involved in unsaturated fatty acids biosynthesis. Catalyzes the dehydration of short chain beta-hydroxyacyl-ACPs and long chain saturated and unsaturated beta-hydroxyacyl-ACPs. This is 3-hydroxyacyl-[acyl-carrier-protein] dehydratase FabZ from Geobacter metallireducens (strain ATCC 53774 / DSM 7210 / GS-15).